A 228-amino-acid polypeptide reads, in one-letter code: Deoxyribose-phosphate aldolase (228 aa).

The active-site Proton donor/acceptor is aspartate 96. Lysine 157 (schiff-base intermediate with acetaldehyde) is an active-site residue. Lysine 185 functions as the Proton donor/acceptor in the catalytic mechanism.

It belongs to the DeoC/FbaB aldolase family. DeoC type 1 subfamily.

The protein resides in the cytoplasm. The enzyme catalyses 2-deoxy-D-ribose 5-phosphate = D-glyceraldehyde 3-phosphate + acetaldehyde. Its pathway is carbohydrate degradation; 2-deoxy-D-ribose 1-phosphate degradation; D-glyceraldehyde 3-phosphate and acetaldehyde from 2-deoxy-alpha-D-ribose 1-phosphate: step 2/2. In terms of biological role, catalyzes a reversible aldol reaction between acetaldehyde and D-glyceraldehyde 3-phosphate to generate 2-deoxy-D-ribose 5-phosphate. The polypeptide is Deoxyribose-phosphate aldolase (Cyanothece sp. (strain PCC 7425 / ATCC 29141)).